The sequence spans 363 residues: Small ribosomal subunit biogenesis GTPase RsgA (363 aa).

The region spanning 112–268 is the CP-type G domain; the sequence is HQQVIAANID…LIDTPGMREL (157 aa). GTP is bound by residues 157–160 and 210–218; these read TKAD and GSSGAGKST. 4 residues coordinate Zn(2+): Cys291, Cys296, His298, and Cys304. The disordered stretch occupies residues 340–363; that stretch reads RVAQNNRGKGSGKRPASIDRPGRR.

This sequence belongs to the TRAFAC class YlqF/YawG GTPase family. RsgA subfamily. In terms of assembly, monomer. Associates with 30S ribosomal subunit, binds 16S rRNA. It depends on Zn(2+) as a cofactor.

Its subcellular location is the cytoplasm. In terms of biological role, one of several proteins that assist in the late maturation steps of the functional core of the 30S ribosomal subunit. Helps release RbfA from mature subunits. May play a role in the assembly of ribosomal proteins into the subunit. Circularly permuted GTPase that catalyzes slow GTP hydrolysis, GTPase activity is stimulated by the 30S ribosomal subunit. This Xanthomonas oryzae pv. oryzae (strain MAFF 311018) protein is Small ribosomal subunit biogenesis GTPase RsgA.